Consider the following 502-residue polypeptide: Probable cytosol aminopeptidase (502 aa).

2 residues coordinate Mn(2+): lysine 269 and aspartate 274. Residue lysine 281 is part of the active site. Positions 292, 351, and 353 each coordinate Mn(2+). The active site involves arginine 355.

This sequence belongs to the peptidase M17 family. Mn(2+) is required as a cofactor.

It localises to the cytoplasm. The catalysed reaction is Release of an N-terminal amino acid, Xaa-|-Yaa-, in which Xaa is preferably Leu, but may be other amino acids including Pro although not Arg or Lys, and Yaa may be Pro. Amino acid amides and methyl esters are also readily hydrolyzed, but rates on arylamides are exceedingly low.. It carries out the reaction Release of an N-terminal amino acid, preferentially leucine, but not glutamic or aspartic acids.. Functionally, presumably involved in the processing and regular turnover of intracellular proteins. Catalyzes the removal of unsubstituted N-terminal amino acids from various peptides. This chain is Probable cytosol aminopeptidase, found in Vibrio parahaemolyticus serotype O3:K6 (strain RIMD 2210633).